The chain runs to 346 residues: tRNA-specific 2-thiouridylase MnmA (346 aa).

An ATP-binding site is contributed by 6 to 13 (AMSGGTDS). The Nucleophile role is filled by Cys-90. Cys-90 and Cys-187 are oxidised to a cystine. Position 114 (Gly-114) interacts with ATP. Residues 137–139 (KDQ) are interaction with tRNA. Catalysis depends on Cys-187, which acts as the Cysteine persulfide intermediate. The interval 292-293 (RY) is interaction with tRNA.

It belongs to the MnmA/TRMU family.

It is found in the cytoplasm. It catalyses the reaction S-sulfanyl-L-cysteinyl-[protein] + uridine(34) in tRNA + AH2 + ATP = 2-thiouridine(34) in tRNA + L-cysteinyl-[protein] + A + AMP + diphosphate + H(+). Functionally, catalyzes the 2-thiolation of uridine at the wobble position (U34) of tRNA, leading to the formation of s(2)U34. The chain is tRNA-specific 2-thiouridylase MnmA from Nitratidesulfovibrio vulgaris (strain DP4) (Desulfovibrio vulgaris).